The chain runs to 202 residues: Tumor necrosis factor alpha-induced protein 8-like protein 3 (202 aa).

Residues 1-10 (MDTDSGDLSE) show a composition bias toward acidic residues. Residues 1–24 (MDTDSGDLSEGELSPGPEQFSSKS) are disordered.

It belongs to the TNFAIP8 family.

The protein localises to the cytoplasm. It is found in the cell membrane. Functionally, may act as a lipid transfer protein. This Xenopus laevis (African clawed frog) protein is Tumor necrosis factor alpha-induced protein 8-like protein 3 (tnfaip8l3).